A 310-amino-acid chain; its full sequence is GMP synthase [glutamine-hydrolyzing] subunit B (310 aa).

The region spanning 2–185 (FDAKSFIEES…LGLPEKIAHR (184 aa)) is the GMPS ATP-PPase domain. 29–35 (SGGVDSS) is an ATP binding site.

In terms of assembly, heterodimer composed of a glutamine amidotransferase subunit (A) and a GMP-binding subunit (B).

The enzyme catalyses XMP + L-glutamine + ATP + H2O = GMP + L-glutamate + AMP + diphosphate + 2 H(+). It participates in purine metabolism; GMP biosynthesis; GMP from XMP (L-Gln route): step 1/1. Functionally, catalyzes the synthesis of GMP from XMP. The sequence is that of GMP synthase [glutamine-hydrolyzing] subunit B from Methanococcus vannielii (strain ATCC 35089 / DSM 1224 / JCM 13029 / OCM 148 / SB).